Here is a 679-residue protein sequence, read N- to C-terminus: Protein hook (679 aa).

The segment at 1–155 is interaction with microtubules; the sequence is MSAPKNEMYY…NIMRALQELE (155 aa). The Calponin-homology (CH) domain maps to 6–123; the sequence is NEMYYSLLEW…RLLQLVLGCA (118 aa). Coiled coils occupy residues 135–437 and 480–574; these read EIMC…LKCG and QTAL…QEIL.

It belongs to the hook family. In terms of assembly, homodimer. Interacts with microtubules via its N-terminus.

It is found in the cytoplasm. Its subcellular location is the cytoskeleton. The protein localises to the endosome. It localises to the synapse. Functionally, involved in endocytic trafficking by stabilizing organelles of the endocytic pathway. Probably acts as a cytoskeletal linker protein required to tether endosome vesicles to the cytoskeleton. Involved in modulation of endocytosis at stages required for down-regulation of membrane proteins that control synapse size. Not involved in synaptic vesicle recycling. Required in R7 cells for boss endocytosis into multivesicular bodies (MVBs). Has a role in regulating adult longevity. The chain is Protein hook from Drosophila melanogaster (Fruit fly).